Consider the following 358-residue polypeptide: Probable D-xylulose reductase A (358 aa).

Cysteine 47, histidine 72, and glutamate 73 together coordinate Zn(2+). NAD(+) is bound at residue 182–187 (GAGPVG).

It belongs to the zinc-containing alcohol dehydrogenase family. The cofactor is Zn(2+).

It catalyses the reaction xylitol + NAD(+) = D-xylulose + NADH + H(+). Its pathway is carbohydrate degradation; L-arabinose degradation via L-arabinitol; D-xylulose 5-phosphate from L-arabinose (fungal route): step 4/5. Xylitol dehydrogenase which catalyzes the conversion of xylitol to D-xylulose. Xylose is a major component of hemicelluloses such as xylan. Most fungi utilize D-xylose via three enzymatic reactions, xylose reductase (XR), xylitol dehydrogenase (XDH), and xylulokinase, to form xylulose 5-phosphate, which enters pentose phosphate pathway. The sequence is that of Probable D-xylulose reductase A (xdhA) from Aspergillus clavatus (strain ATCC 1007 / CBS 513.65 / DSM 816 / NCTC 3887 / NRRL 1 / QM 1276 / 107).